Here is a 704-residue protein sequence, read N- to C-terminus: Protein NBR1 homolog (704 aa).

Met1 is modified (N-acetylmethionine). Residues 7–92 (ALVVKVSYGG…KFLKINVNAG (86 aa)) form the PB1 domain. Composition is skewed to polar residues over residues 95–108 (TNSA…SSTP), 171–189 (PQES…SGAS), and 223–233 (HSKTSGHVPNS). Disordered regions lie at residues 95–114 (TNSA…MPNP) and 171–233 (PQES…VPNS). The ZZ-type; degenerate zinc finger occupies 286–336 (HKGIRCDGCGVLPITGPRFKSKVKEDYDLCTICYSVMGNEGDYTRMDKPVS). Zn(2+) contacts are provided by Cys291, Cys294, Cys315, and Cys318. The 45-residue stretch at 657 to 701 (GVSEWDPILEELQEMGFCDDVTNKRLLKKNNGSIKGVVMDLLTGE) folds into the UBA domain. The short motif at 661–664 (WDPI) is the LIR element.

Homodimer. Interacts with ATG8A, ATG8B, ATG8C, ATG8D, ATG8F and ATG8I. Binds to ubiquitin.

The protein resides in the cytoplasm. Its subcellular location is the vacuole. In terms of biological role, autophagic substrate degraded in the vacuole by non-selective autophagy. Requires ATG8 protein expression to be recognized as an autophagic substrate. Acts probably as a receptor for autophagosomal degradation of ubiquitinated proteins. Targets ubiquitinated protein aggregates derived from denatured or damaged non-native proteins generated under stress conditions. Functions additively with the E3 ubiquitin-protein ligase CHIP for autophagosomal degradation of proteotoxic aggregates formed under stress conditions. The polypeptide is Protein NBR1 homolog (Arabidopsis thaliana (Mouse-ear cress)).